Consider the following 200-residue polypeptide: Inner membrane-spanning protein YciB (200 aa).

The next 6 membrane-spanning stretches (helical) occupy residues 7–27 (HPLF…FVNA), 32–52 (FAAT…SYVV), 56–76 (IPLM…LTLV), 93–113 (LFAA…AIMF), 126–146 (ILTF…EIIW), and 153–173 (FWVG…AIAQ).

This sequence belongs to the YciB family.

It localises to the cell inner membrane. Functionally, plays a role in cell envelope biogenesis, maintenance of cell envelope integrity and membrane homeostasis. The polypeptide is Inner membrane-spanning protein YciB (Bradyrhizobium sp. (strain ORS 278)).